The following is a 267-amino-acid chain: Zinc finger protein ZAT1 (267 aa).

Residues 5-27 (HKCKLCWKSFANGRALGGHMRSH) form a C2H2-type 1 zinc finger. 2 disordered regions span residues 34-99 (PSQP…ADIK) and 181-204 (SHKK…KKKS). The span at 52-62 (QDRESETESSK) shows a compositional bias: basic and acidic residues. Positions 63–73 (KPSRKRSRLNR) are enriched in basic residues. Basic and acidic residues predominate over residues 83 to 97 (QSNEEGKSETARAAD). 2 consecutive C2H2-type zinc fingers follow at residues 160–182 (FECE…RASH) and 209–231 (HECP…KRSH).

The protein localises to the nucleus. In terms of biological role, probable transcription factor that may be involved in stress responses. This chain is Zinc finger protein ZAT1 (ZAT1), found in Arabidopsis thaliana (Mouse-ear cress).